Here is a 336-residue protein sequence, read N- to C-terminus: N-acetyl-gamma-glutamyl-phosphate reductase (336 aa).

The active site involves C148.

It belongs to the NAGSA dehydrogenase family. Type 1 subfamily.

The protein resides in the cytoplasm. It carries out the reaction N-acetyl-L-glutamate 5-semialdehyde + phosphate + NADP(+) = N-acetyl-L-glutamyl 5-phosphate + NADPH + H(+). Its pathway is amino-acid biosynthesis; L-arginine biosynthesis; N(2)-acetyl-L-ornithine from L-glutamate: step 3/4. In terms of biological role, catalyzes the NADPH-dependent reduction of N-acetyl-5-glutamyl phosphate to yield N-acetyl-L-glutamate 5-semialdehyde. The sequence is that of N-acetyl-gamma-glutamyl-phosphate reductase from Campylobacter curvus (strain 525.92).